Consider the following 1488-residue polypeptide: MIERGKFRSLTLINWNGFFARTFDLDELVTTLSGGNGAGKSTTMAAFVTALIPDLTLLHFRNTTEAGATSGSRDKGLHGKLKAGVCYSMLDTINSRHQRVVVGVRLQQVAGRDRKVDIKPFAIQGLPMSVQPTQLVTETLNERQARVLSLAELKDKLDEMEGVQFKQFNSITDYHSLMFDLGIIARRLRSASDRSKFYRLIEASLYGGISSAITRSLRDYLLPENSGVRKAFQDMEAALRENRLTLEAIRVTQSDRDLFKHLISEATDYVAADYMRHANERRVHLDQALAFRRELYTSRKQLAAEQYKHVDMARELGEHNGAEGSLEADYQAASDHLNLVQTALRQQEKIERYEADLEELQIRLEEQNEVVAEAAEMQEENEARAEAAELEVDELKSQLADYQQALDVQQTRAIQYNQAISALARARELCHLPDLTPESAAEWLDTFQAKEQEATEKLLSLEQKMSVAQTAHSQFEQAYQLVAAINGPLARGEAWDVARELLRDGVNQRHLAEQVQPLRMRLSELEQRLREQQEAERLLAEFCKRQGKNFDIDELEALHQELEARIAALSDSVANASEQRLALRQEQEQLQSRIQHLMQRAPVWLAAQNSLNQLSEQCGEAFSSSQEVTEYLQQLLEREREAIVERDEVGARKNAVDEEIERLSQPGGAEDQRLNTLAERFGGVLLSEIYDDVSLEDAPYFSALYGPSRHAIVVPDLSQIAEQLEGLTDCPEDLYLIEGDPQSFDDSVFSVDELEKAVVVKIADRQWRYSRFPSLPIFGRAARENRIESLHAEREVLSERFATLSFDVQKTQRLHQAFSRFIGSHLSVAFEDDPEAEIRRLNGRRVELERALATHENDNQQQRLQFEQAKEGVSALNRLLPRLNLLADETLADRVDEIQERLDEAQEAARFVQQYGNQLAKLEPVVSVLQSDPEQFEQLKEDYAWSQQMQRDARQQAFALAEVVERRAHFSYSDSAEMLSGNSDLNEKLRQRLEQAEAERTRAREALRSHASQLSQYSQVLASLKSSYDTKKELLNDLQRELQDIGVRADSGAEERARQRRDELHAQLSNNRSRRNQLEKALTFCEAEMDNLTRKLRKLERDYHEMREQVVTAKAGWCAVMRMVKDNGVERRLHRRELAYLSADELRSMSDKALGALRLAVADNEHLRDVLRLSEDPKRPERKIQFFVAVYQHLRERIRQDIIRTDDPVEAIEQMEIELSRLTEELTSREQKLAISSRSVANIIRKTIQREQNRIRMLNQGLQSVSFGQVNSVRLNVNVRETHATLLDVLSEQQEQHQDLFNSNRLTFSEALAKLYQRLNPQIDMGQRTPQTIGEELLDYRNYLEMEVEVNRGSDGWLRAESGALSTGEAIGTGMSILVMVVQSWEDEARRLRGKDISPCRLLFLDEAARLDARSIATLFELCERLQMQLIIAAPENISPEKGTTYKLVRKVFQNTEHVHVVGLRGFAPQLPETLPGTQTEDTPSEAS.

34–41 is a binding site for ATP; sequence GGNGAGKS. 3 coiled-coil regions span residues 326–418, 444–472, and 509–602; these read LEAD…QYNQ, LDTFQAKEQEATEKLLSLEQKMSVAQTAH, and RHLA…QRAP. The flexible hinge stretch occupies residues 666–783; the sequence is PGGAEDQRLN…SLPIFGRAAR (118 aa). Coiled-coil stretches lie at residues 835-923, 977-1116, and 1209-1265; these read EAEI…AKLE, EMLS…AKAG, and VEAI…LQSV. Residues 1049–1074 form a disordered region; that stretch reads ADSGAEERARQRRDELHAQLSNNRSR. Basic and acidic residues predominate over residues 1051–1065; the sequence is SGAEERARQRRDELH.

It belongs to the SMC family. MukB subfamily. In terms of assembly, homodimerization via its hinge domain. Binds to DNA via its C-terminal region. Interacts, and probably forms a ternary complex, with MukE and MukF via its C-terminal region. The complex formation is stimulated by calcium or magnesium. Interacts with tubulin-related protein FtsZ.

It is found in the cytoplasm. The protein resides in the nucleoid. Functionally, plays a central role in chromosome condensation, segregation and cell cycle progression. Functions as a homodimer, which is essential for chromosome partition. Involved in negative DNA supercoiling in vivo, and by this means organize and compact chromosomes. May achieve or facilitate chromosome segregation by condensation DNA from both sides of a centrally located replisome during cell division. The polypeptide is Chromosome partition protein MukB (Salmonella arizonae (strain ATCC BAA-731 / CDC346-86 / RSK2980)).